The sequence spans 139 residues: Peptide methionine sulfoxide reductase B4 (139 aa).

Residue A2 is modified to N-acetylalanine. The region spanning 12–133 (EEEWRAVLSP…NSVSINFNPA (122 aa)) is the MsrB domain. 4 residues coordinate Zn(2+): C51, C54, C97, and C100. A disulfide bridge connects residues C69 and C122. The active-site Nucleophile is the C122.

It belongs to the MsrB Met sulfoxide reductase family. The cofactor is Zn(2+).

The protein resides in the cytoplasm. It localises to the cytosol. It catalyses the reaction L-methionyl-[protein] + [thioredoxin]-disulfide + H2O = L-methionyl-(R)-S-oxide-[protein] + [thioredoxin]-dithiol. Functionally, catalyzes the reduction of methionine sulfoxide (MetSO) to methionine in proteins. Plays a protective role against oxidative stress by restoring activity to proteins that have been inactivated by methionine oxidation. MSRB family specifically reduces the MetSO R-enantiomer. The polypeptide is Peptide methionine sulfoxide reductase B4 (MSRB4) (Arabidopsis thaliana (Mouse-ear cress)).